Here is a 461-residue protein sequence, read N- to C-terminus: TWiK family of potassium channels protein 18 (461 aa).

The Cytoplasmic portion of the chain corresponds to 1–21 (MAIVAQGVSTILTTFQKTFKG). The helical transmembrane segment at 22–42 (LLPLIILVAYTLLGAWIFWMI) threads the bilayer. N88 carries N-linked (GlcNAc...) asparagine glycosylation. The segment at residues 116-136 (FLGSIFYCMTVYTTIGYGNIV) is an intramembrane region (pore-forming). A helical membrane pass occupies residues 144–164 (FATILYAFIGIPLTVLSLYCL). The Cytoplasmic portion of the chain corresponds to 165-224 (GSLFAKGCKMLWRFFLKSTRVVSKDLSNKISEAADNIEEGTTAITPSAEKTENNDDDLLS). Residues 225 to 245 (FPISGLLLITVIWVIFCAVLF) traverse the membrane as a helical segment. The pore-forming intramembrane region spans 253-273 (FGTSLYFTLISFTTIGFGDIL). Residues 281–301 (PIVGVLLLIGLSLVSTVMTLI) traverse the membrane as a helical segment. The Cytoplasmic portion of the chain corresponds to 302–461 (QQQIEALASG…GNEDYLEHDI (160 aa)). The interval 328 to 347 (REDGEVDEHVDPEEDPENNK) is disordered.

This sequence belongs to the two pore domain potassium channel (TC 1.A.1.8) family. As to expression, expressed in body wall muscle.

It localises to the membrane. In terms of biological role, outwardly rectifying potassium channel protein; activity is sharply augmented by increase in temperature. The chain is TWiK family of potassium channels protein 18 (twk-18) from Caenorhabditis elegans.